The chain runs to 188 residues: MDMGSKEALMESPPDYSAAPRGRFGIPCCPVHLKRLLIVVVVVVLVVVVIVGALLMGLHMSQKHTEMVLEMSIGAPEVQQRLALSEWAGTTATFPIGSTGIVTCDYQRLLIAYKPAPGTCCYLMKMAPDSIPSLEALARKFQANPAEPPTQRGQDKGPAAGPASSGGELAFLGAAVSTLCGEVPLIYI.

Residues 1–23 constitute a propeptide that is removed on maturation; sequence MDMGSKEALMESPPDYSAAPRGR. S-palmitoyl cysteine attachment occurs at residues Cys-28 and Cys-29. Positions 59–188 are excised as a propeptide; sequence HMSQKHTEMV…LCGEVPLIYI (130 aa). One can recognise a BRICHOS domain in the interval 94–188; that stretch reads FPIGSTGIVT…LCGEVPLIYI (95 aa). A disulfide bond links Cys-121 and Cys-180. Residues 144 to 164 are disordered; sequence NPAEPPTQRGQDKGPAAGPAS.

The protein localises to the secreted. Its subcellular location is the extracellular space. It is found in the surface film. Functionally, pulmonary surfactant associated proteins promote alveolar stability by lowering the surface tension at the air-liquid interface in the peripheral air spaces. This chain is Surfactant protein C (SFTPC), found in Oryctolagus cuniculus (Rabbit).